Reading from the N-terminus, the 498-residue chain is Cytochrome c-552 (498 aa).

A signal peptide spans 1–31 (MKNKERKLKSWQGWLIFSSSMVVVFCLGLLA). Histidine 119 contributes to the heme c binding site. Heme-binding residues include cysteine 148, cysteine 151, and lysine 152. Residues cysteine 186, cysteine 189, histidine 190, cysteine 228, cysteine 231, and histidine 232 each coordinate heme c. Ca(2+) is bound by residues glutamate 234, tyrosine 235, lysine 280, and glutamine 282. Tyrosine 235 is a binding site for substrate. Residue histidine 283 coordinates substrate. Positions 294, 301, 304, 305, 319, 332, 335, 336, and 411 each coordinate heme c.

Belongs to the cytochrome c-552 family. It depends on Ca(2+) as a cofactor. Requires heme c as cofactor.

It is found in the periplasm. The catalysed reaction is 6 Fe(III)-[cytochrome c] + NH4(+) + 2 H2O = 6 Fe(II)-[cytochrome c] + nitrite + 8 H(+). It functions in the pathway nitrogen metabolism; nitrate reduction (assimilation). Functionally, catalyzes the reduction of nitrite to ammonia, consuming six electrons in the process. The sequence is that of Cytochrome c-552 from Porphyromonas gingivalis (strain ATCC BAA-308 / W83).